Here is a 198-residue protein sequence, read N- to C-terminus: Prostamide/prostaglandin F synthase (198 aa).

Y108 is subject to Phosphotyrosine.

The protein belongs to the peroxiredoxin-like PRXL2 family. Prostamide/prostaglandin F synthase subfamily.

The protein resides in the cytoplasm. It localises to the cytosol. The catalysed reaction is prostaglandin H2 + [thioredoxin]-dithiol = prostaglandin F2alpha + [thioredoxin]-disulfide. It carries out the reaction prostamide F2alpha + [thioredoxin]-disulfide = prostamide H2 + [thioredoxin]-dithiol. In terms of biological role, catalyzes the reduction of prostaglandin-ethanolamide H(2) (prostamide H(2)) to prostamide F(2alpha) with NADPH as proton donor. Also able to reduce prostaglandin H(2) to prostaglandin F(2alpha). This is Prostamide/prostaglandin F synthase from Homo sapiens (Human).